The sequence spans 202 residues: Ribonuclease HII (202 aa).

In terms of domain architecture, RNase H type-2 spans 12–201; sequence LLIAGVDEAG…VRQLKLFIPE (190 aa). Residues Asp18, Glu19, and Asp110 each coordinate a divalent metal cation.

This sequence belongs to the RNase HII family. The cofactor is Mn(2+). It depends on Mg(2+) as a cofactor.

It localises to the cytoplasm. The enzyme catalyses Endonucleolytic cleavage to 5'-phosphomonoester.. Functionally, endonuclease that specifically degrades the RNA of RNA-DNA hybrids. The protein is Ribonuclease HII of Coxiella burnetii (strain CbuK_Q154) (Coxiella burnetii (strain Q154)).